The chain runs to 188 residues: Putative glutamine amidotransferase-like protein YvdE homolog (188 aa).

One can recognise a Glutamine amidotransferase type-1 domain in the interval Ser-17 to Ala-188.

This is Putative glutamine amidotransferase-like protein YvdE homolog from Lactococcus lactis subsp. cremoris (Streptococcus cremoris).